Reading from the N-terminus, the 346-residue chain is Galactitol 1-phosphate 5-dehydrogenase (346 aa).

Residues C38, H59, C89, C92, C95, C103, and E144 each coordinate Zn(2+).

Belongs to the zinc-containing alcohol dehydrogenase family. Requires Zn(2+) as cofactor.

It catalyses the reaction galactitol 1-phosphate + NAD(+) = keto-D-tagatose 6-phosphate + NADH + H(+). In terms of biological role, converts galactitol 1-phosphate to tagatose 6-phosphate. The sequence is that of Galactitol 1-phosphate 5-dehydrogenase (gatD) from Escherichia coli O157:H7.